Here is a 1567-residue protein sequence, read N- to C-terminus: ABC multidrug transporter MDR1 (1567 aa).

The span at 1–11 (MASQPPQPPSG) shows a compositional bias: pro residues. A disordered region spans residues 1–37 (MASQPPQPPSGQPDTQYEEYQSEVITETTNRPTPAAD). Residues 22-32 (SEVITETTNRP) show a composition bias toward polar residues. Asn149, Asn157, and Asn356 each carry an N-linked (GlcNAc...) asparagine glycan. The ABC transporter 1 domain occupies 167 to 432 (VQYQDTFLSP…FEEMGWYCPP (266 aa)). The next 6 helical transmembrane spans lie at 543 to 563 (STIATNISQIMMALIIGSLFF), 571 to 591 (GFFAKGSVIFFAILLNGLMSI), 636 to 656 (IPIKFLLALVFNIIIYFLGGL), 661 to 681 (AKFFIFFLFTFITILTMSAIF), 691 to 711 (IPQALALAGVMILALVIYTGF), and 798 to 818 (LGILLGFLAFFYFVYLMVSEL). N-linked (GlcNAc...) asparagine glycosylation is found at Asn819, Asn895, and Asn912. Residues 891–1134 (FTWRNVTYDI…LLNYFETHGA (244 aa)) enclose the ABC transporter 2 domain. Position 927-934 (927-934 (GVSGAGKT)) interacts with ATP. A disordered region spans residues 1172–1202 (ESRHVQQELDRIQSETSKRNEGHGQSAEKEP). Residues 1231 to 1251 (IWGKLLLGLASALFIGFSFFL) traverse the membrane as a helical segment. The N-linked (GlcNAc...) asparagine glycan is linked to Asn1253. 5 helical membrane passes run 1257–1277 (AGLQNSLFSIFMLTTIFSSLV), 1305–1325 (VFLLANIIVEIPYQILLGIIA), 1345–1365 (ILLLYCVQFFIFASTFAQMII), 1372–1392 (ETAGGIATTMFGLMVTFNGVL), and 1498–1518 (GIGWAYIVFNIFATVALYYLI).

Belongs to the ABC transporter superfamily. ABCG family. PDR (TC 3.A.1.205) subfamily.

The protein localises to the cell membrane. The catalysed reaction is voriconazole(in) + ATP + H2O = voriconazole(out) + ADP + phosphate + H(+). It catalyses the reaction fluconazole(in) + ATP + H2O = fluconazole(out) + ADP + phosphate + H(+). The enzyme catalyses (R)-miconazole(in) + ATP + H2O = (R)-miconazole(out) + ADP + phosphate + H(+). It carries out the reaction (S)-miconazole(in) + ATP + H2O = (S)-miconazole(out) + ADP + phosphate + H(+). In terms of biological role, pleiotropic ABC efflux transporter that may be involved in the modulation susceptibility to a wide range of unrelated cytotoxic compounds, including ethidium bromide, ketoconazole, cycloheximide, fluconazole, griseofulvin, imazalil and itraconazole. In Trichophyton interdigitale (strain MR816), this protein is ABC multidrug transporter MDR1.